We begin with the raw amino-acid sequence, 302 residues long: ATP synthase mitochondrial F1 complex assembly factor 1 (302 aa).

The protein belongs to the ATP11 family. As to quaternary structure, interacts with ATP5F1B; involved in the assembly of the F1 component of the mitochondrial ATP synthase (ATPase).

Its subcellular location is the mitochondrion inner membrane. Its function is as follows. Has a complex stabilizing activity in the assembly of the mitochondrial F1-F0 complex. The sequence is that of ATP synthase mitochondrial F1 complex assembly factor 1 (atpaf1) from Danio rerio (Zebrafish).